Consider the following 424-residue polypeptide: Serine--tRNA ligase (424 aa).

Residues 109–129 form a disordered region; sequence QEDVPYGESEEDNREERKWGD. 231 to 233 contacts L-serine; that stretch reads TAE. ATP is bound at residue 262–264; the sequence is RSE. L-serine is bound at residue glutamate 285. 349-352 lines the ATP pocket; it reads EISS. Serine 385 lines the L-serine pocket.

Belongs to the class-II aminoacyl-tRNA synthetase family. Type-1 seryl-tRNA synthetase subfamily. Homodimer. The tRNA molecule binds across the dimer.

It is found in the cytoplasm. It catalyses the reaction tRNA(Ser) + L-serine + ATP = L-seryl-tRNA(Ser) + AMP + diphosphate + H(+). It carries out the reaction tRNA(Sec) + L-serine + ATP = L-seryl-tRNA(Sec) + AMP + diphosphate + H(+). It participates in aminoacyl-tRNA biosynthesis; selenocysteinyl-tRNA(Sec) biosynthesis; L-seryl-tRNA(Sec) from L-serine and tRNA(Sec): step 1/1. Its function is as follows. Catalyzes the attachment of serine to tRNA(Ser). Is also able to aminoacylate tRNA(Sec) with serine, to form the misacylated tRNA L-seryl-tRNA(Sec), which will be further converted into selenocysteinyl-tRNA(Sec). The polypeptide is Serine--tRNA ligase (Shouchella clausii (strain KSM-K16) (Alkalihalobacillus clausii)).